Consider the following 154-residue polypeptide: Keratin-associated protein 9-4 (154 aa).

Tandem repeats lie at residues cysteine 8–threonine 12, cysteine 13–threonine 17, cysteine 18–threonine 22, cysteine 37–serine 41, cysteine 42–serine 46, cysteine 51–threonine 55, cysteine 56–threonine 60, cysteine 61–threonine 65, cysteine 70–serine 74, cysteine 75–proline 79, cysteine 80–threonine 84, cysteine 85–serine 89, cysteine 129–alanine 133, cysteine 134–threonine 138, and cysteine 148–phenylalanine 152. Positions cysteine 8 to phenylalanine 152 are 15 X 5 AA repeats of C-C-[RQVGE]-[SPTN]-[TASPF].

This sequence belongs to the KRTAP type 9 family. As to quaternary structure, interacts with hair keratins.

Functionally, in the hair cortex, hair keratin intermediate filaments are embedded in an interfilamentous matrix, consisting of hair keratin-associated proteins (KRTAP), which are essential for the formation of a rigid and resistant hair shaft through their extensive disulfide bond cross-linking with abundant cysteine residues of hair keratins. The matrix proteins include the high-sulfur and high-glycine-tyrosine keratins. In Homo sapiens (Human), this protein is Keratin-associated protein 9-4 (KRTAP9-4).